The sequence spans 69 residues: UPF0248 protein AF_0420 (69 aa).

It belongs to the UPF0248 family.

This chain is UPF0248 protein AF_0420, found in Archaeoglobus fulgidus (strain ATCC 49558 / DSM 4304 / JCM 9628 / NBRC 100126 / VC-16).